We begin with the raw amino-acid sequence, 416 residues long: Serine/threonine transporter SstT (416 aa).

9 helical membrane passes run 15–35 (SLVSQILVGLVFGILLAMFMP), 49–69 (VGALKAVAPLLVFVLVMAAII), 82–102 (ILLLYLLGTFLAAAVAVVASF), 141–161 (ALLDANYIGILAWAIGLGIAM), 192–212 (LGILGLVASTLAETGFDALFG), 217–237 (LVVLIGCMLFIAFVVNPLIVF), 288–308 (VSIPLGATINMAGAAITITVL), 316–336 (LGMEVDLATAILLSVVATISA), and 363–383 (IAMQVVAVGFIIGVLQDSAET).

Belongs to the dicarboxylate/amino acid:cation symporter (DAACS) (TC 2.A.23) family.

It localises to the cell inner membrane. It carries out the reaction L-serine(in) + Na(+)(in) = L-serine(out) + Na(+)(out). The catalysed reaction is L-threonine(in) + Na(+)(in) = L-threonine(out) + Na(+)(out). Its function is as follows. Involved in the import of serine and threonine into the cell, with the concomitant import of sodium (symport system). The protein is Serine/threonine transporter SstT of Aeromonas hydrophila subsp. hydrophila (strain ATCC 7966 / DSM 30187 / BCRC 13018 / CCUG 14551 / JCM 1027 / KCTC 2358 / NCIMB 9240 / NCTC 8049).